Consider the following 96-residue polypeptide: Molybdopterin synthase sulfur carrier subunit (96 aa).

The residue at position 96 (Gly-96) is a 1-thioglycine; alternate. Residue Gly-96 is modified to Glycyl adenylate; alternate.

It belongs to the MoaD family. MOCS2A subfamily. As to quaternary structure, heterotetramer; composed of 2 small (MOCS2A) and 2 large (MOCS2B) subunits. In terms of processing, C-terminal thiocarboxylation occurs in 2 steps, it is first acyl-adenylated (-COAMP) via the hesA/moeB/thiF part of MOCS3, then thiocarboxylated (-COSH) via the rhodanese domain of MOCS3.

It is found in the cytoplasm. It participates in cofactor biosynthesis; molybdopterin biosynthesis. In terms of biological role, acts as a sulfur carrier required for molybdopterin biosynthesis. Component of the molybdopterin synthase complex that catalyzes the conversion of precursor Z into molybdopterin by mediating the incorporation of 2 sulfur atoms into precursor Z to generate a dithiolene group. In the complex, serves as sulfur donor by being thiocarboxylated (-COSH) at its C-terminus by MOCS3. After interaction with MOCS2B, the sulfur is then transferred to precursor Z to form molybdopterin. The polypeptide is Molybdopterin synthase sulfur carrier subunit (Arabidopsis thaliana (Mouse-ear cress)).